The following is a 297-amino-acid chain: Ectoine dioxygenase (297 aa).

Residue Gln131 participates in L-ectoine binding. A 2-oxoglutarate-binding site is contributed by Lys137. Positions 148, 150, and 249 each coordinate Fe cation.

Belongs to the PhyH family. EctD subfamily. Homodimer. Fe(2+) is required as a cofactor.

The catalysed reaction is L-ectoine + 2-oxoglutarate + O2 = 5-hydroxyectoine + succinate + CO2. Functionally, involved in the biosynthesis of 5-hydroxyectoine, called compatible solute, which helps organisms to survive extreme osmotic stress by acting as a highly soluble organic osmolyte. Catalyzes the 2-oxoglutarate-dependent selective hydroxylation of L-ectoine to yield (4S,5S)-5-hydroxyectoine. This Streptomyces anulatus (Streptomyces chrysomallus) protein is Ectoine dioxygenase.